Consider the following 271-residue polypeptide: Regulatory protein RecX (271 aa).

Belongs to the RecX family.

Its subcellular location is the cytoplasm. Modulates RecA activity. This is Regulatory protein RecX from Lactobacillus delbrueckii subsp. bulgaricus (strain ATCC 11842 / DSM 20081 / BCRC 10696 / JCM 1002 / NBRC 13953 / NCIMB 11778 / NCTC 12712 / WDCM 00102 / Lb 14).